The primary structure comprises 243 residues: Pyridoxine 5'-phosphate synthase (243 aa).

Residue N9 coordinates 3-amino-2-oxopropyl phosphate. Position 11 to 12 (D11 to H12) interacts with 1-deoxy-D-xylulose 5-phosphate. Position 20 (R20) interacts with 3-amino-2-oxopropyl phosphate. The active-site Proton acceptor is the H45. 1-deoxy-D-xylulose 5-phosphate-binding residues include R47 and H52. Residue E72 is the Proton acceptor of the active site. A 1-deoxy-D-xylulose 5-phosphate-binding site is contributed by T102. The Proton donor role is filled by H193. 3-amino-2-oxopropyl phosphate is bound by residues G194 and G215–H216.

The protein belongs to the PNP synthase family. In terms of assembly, homooctamer; tetramer of dimers.

Its subcellular location is the cytoplasm. It carries out the reaction 3-amino-2-oxopropyl phosphate + 1-deoxy-D-xylulose 5-phosphate = pyridoxine 5'-phosphate + phosphate + 2 H2O + H(+). It participates in cofactor biosynthesis; pyridoxine 5'-phosphate biosynthesis; pyridoxine 5'-phosphate from D-erythrose 4-phosphate: step 5/5. In terms of biological role, catalyzes the complicated ring closure reaction between the two acyclic compounds 1-deoxy-D-xylulose-5-phosphate (DXP) and 3-amino-2-oxopropyl phosphate (1-amino-acetone-3-phosphate or AAP) to form pyridoxine 5'-phosphate (PNP) and inorganic phosphate. The chain is Pyridoxine 5'-phosphate synthase from Yersinia pseudotuberculosis serotype I (strain IP32953).